Reading from the N-terminus, the 124-residue chain is Putative peptidyl-tRNA hydrolase (124 aa).

It belongs to the PTH2 family.

It catalyses the reaction an N-acyl-L-alpha-aminoacyl-tRNA + H2O = an N-acyl-L-amino acid + a tRNA + H(+). This chain is Putative peptidyl-tRNA hydrolase, found in Fowlpox virus (strain NVSL) (FPV).